Consider the following 259-residue polypeptide: 1,2-dihydroxy-1,2-dihydronaphthalene dehydrogenase (259 aa).

Residues 8–35 (AITG…SALV) and Asp-58 contribute to the NAD(+) site. Ser-140 is a substrate binding site. Residue Tyr-153 is the Proton acceptor of the active site. Position 157 (Lys-157) interacts with NAD(+).

It belongs to the short-chain dehydrogenases/reductases (SDR) family.

It catalyses the reaction (1R,2S)-1,2-dihydronaphthalene-1,2-diol + NAD(+) = naphthalene-1,2-diol + NADH + H(+). Its pathway is aromatic compound metabolism; naphthalene degradation. Functionally, catalyzes the oxidation of naphthalene dihydrodiol into 1,2-dihydroxynaphthalene. The protein is 1,2-dihydroxy-1,2-dihydronaphthalene dehydrogenase of Ralstonia sp.